A 398-amino-acid polypeptide reads, in one-letter code: Acetate kinase 1 (398 aa).

Asn9 lines the Mg(2+) pocket. Lys16 provides a ligand contact to ATP. Arg89 lines the substrate pocket. Asp146 functions as the Proton donor/acceptor in the catalytic mechanism. ATP-binding positions include 206 to 210 (HLGNG), 281 to 283 (DCR), and 329 to 333 (GIGEN). Mg(2+) is bound at residue Glu384.

The protein belongs to the acetokinase family. As to quaternary structure, homodimer. Mg(2+) serves as cofactor. The cofactor is Mn(2+).

The protein localises to the cytoplasm. The catalysed reaction is acetate + ATP = acetyl phosphate + ADP. The protein operates within metabolic intermediate biosynthesis; acetyl-CoA biosynthesis; acetyl-CoA from acetate: step 1/2. Catalyzes the formation of acetyl phosphate from acetate and ATP. Can also catalyze the reverse reaction. This is Acetate kinase 1 from Aliivibrio fischeri (strain ATCC 700601 / ES114) (Vibrio fischeri).